Here is a 191-residue protein sequence, read N- to C-terminus: Early nodulin-like protein 8 (191 aa).

Positions 1-22 (MGVMSLSKTMVVVVLQVMILLG) are cleaved as a signal peptide. The Phytocyanin domain occupies 31–133 (TLYKVGDLDA…YQKLLVSVGT (103 aa)). A disulfide bond links cysteine 87 and cysteine 121. 2 N-linked (GlcNAc...) asparagine glycosylation sites follow: asparagine 104 and asparagine 108. Serine 165 carries GPI-anchor amidated serine lipidation. Positions 166–191 (SASSSLISAFSTVAASLACAVVGAIM) are cleaved as a propeptide — removed in mature form.

It belongs to the early nodulin-like (ENODL) family. As to expression, mostly expressed in seedlings and roots, and, to a lower extent, in leaves, flowers, stems and seeds.

Its subcellular location is the cell membrane. Its function is as follows. May act as a carbohydrate transporter. In Arabidopsis thaliana (Mouse-ear cress), this protein is Early nodulin-like protein 8.